We begin with the raw amino-acid sequence, 160 residues long: Epithelial membrane protein 1 (160 aa).

The chain crosses the membrane as a helical span at residues 1 to 21; it reads MLVLLAAIFVVHIATCVMLFV. N-linked (GlcNAc...) asparagine glycans are attached at residues Asn35 and Asn43. The next 3 membrane-spanning stretches (helical) occupy residues 67–87, 95–115, and 137–157; these read FMILSIIFSVISLIIFVFQLF, FFLSGATMLVCWLCVLIGASI, and FILAWICFCFSFVVGVLYLVL.

The protein belongs to the PMP-22/EMP/MP20 family. As to expression, most abundant in squamous epithelia.

It localises to the membrane. In Oryctolagus cuniculus (Rabbit), this protein is Epithelial membrane protein 1 (EMP1).